Consider the following 72-residue polypeptide: Sperm protein associated with the nucleus on the X chromosome N1 (72 aa).

Residues 1-44 are disordered; it reads MEQPTSSINGEKRKSPCESNNENDEMQETPNRDLAPEPSLKKMK.

The protein belongs to the SPAN-X family.

This is Sperm protein associated with the nucleus on the X chromosome N1 (SPANXN1) from Homo sapiens (Human).